A 203-amino-acid chain; its full sequence is Non-histone protein 10 (203 aa).

The residue at position 2 (S2) is an N-acetylserine. Disordered stretches follow at residues 78–97 (KSKTKRHKVKERDPNMPKRP) and 161–203 (ISNI…VSSN). Positions 94-158 (PKRPTNAYLL…RYQMEMEIYN (65 aa)) form a DNA-binding region, HMG box.

In terms of assembly, component of the chromatin-remodeling INO80 complex, at least composed of ARP4, ARP5, ARP8, RVB1, RVB2, TAF14, NHP10, IES1, IES3, IES4, IES6, ACT1, IES2, IES5 and INO80.

It localises to the nucleus. Functionally, probably involved in transcription regulation via its interaction with the INO80 complex, a chromatin remodeling complex. The polypeptide is Non-histone protein 10 (NHP10) (Saccharomyces cerevisiae (strain ATCC 204508 / S288c) (Baker's yeast)).